We begin with the raw amino-acid sequence, 270 residues long: Phosphatidylglycerol--prolipoprotein diacylglyceryl transferase (270 aa).

Helical transmembrane passes span 18 to 38, 55 to 75, 90 to 110, and 115 to 135; these read ITIYWYGVIIGTGVLIGLWLA, LVLFAVPIAIVCARAYYVLFE, WQGGLAIHGGLIGAVATGAVF, and GLSFWKLADIAAPSIILGQAI. Residue Arg137 coordinates a 1,2-diacyl-sn-glycero-3-phospho-(1'-sn-glycerol). Helical transmembrane passes span 177-197, 205-225, and 236-256; these read HPTFLYESLWNLVGFFLLLWL, GELFLSYLIWYSVGRFWIEGM, and LRAAQVVSVTLIVLSIALWIV.

Belongs to the Lgt family.

It is found in the cell membrane. The catalysed reaction is L-cysteinyl-[prolipoprotein] + a 1,2-diacyl-sn-glycero-3-phospho-(1'-sn-glycerol) = an S-1,2-diacyl-sn-glyceryl-L-cysteinyl-[prolipoprotein] + sn-glycerol 1-phosphate + H(+). Its pathway is protein modification; lipoprotein biosynthesis (diacylglyceryl transfer). Functionally, catalyzes the transfer of the diacylglyceryl group from phosphatidylglycerol to the sulfhydryl group of the N-terminal cysteine of a prolipoprotein, the first step in the formation of mature lipoproteins. The polypeptide is Phosphatidylglycerol--prolipoprotein diacylglyceryl transferase (Geobacillus kaustophilus (strain HTA426)).